Reading from the N-terminus, the 248-residue chain is 4-hydroxy-tetrahydrodipicolinate reductase (248 aa).

NAD(+)-binding positions include glycine 9 to valine 14, glycine 77 to threonine 79, and alanine 104 to phenylalanine 107. Histidine 134 (proton donor/acceptor) is an active-site residue. Histidine 135 provides a ligand contact to (S)-2,3,4,5-tetrahydrodipicolinate. Residue lysine 138 is the Proton donor of the active site. Glycine 144–threonine 145 provides a ligand contact to (S)-2,3,4,5-tetrahydrodipicolinate.

The protein belongs to the DapB family.

It localises to the cytoplasm. The catalysed reaction is (S)-2,3,4,5-tetrahydrodipicolinate + NAD(+) + H2O = (2S,4S)-4-hydroxy-2,3,4,5-tetrahydrodipicolinate + NADH + H(+). The enzyme catalyses (S)-2,3,4,5-tetrahydrodipicolinate + NADP(+) + H2O = (2S,4S)-4-hydroxy-2,3,4,5-tetrahydrodipicolinate + NADPH + H(+). The protein operates within amino-acid biosynthesis; L-lysine biosynthesis via DAP pathway; (S)-tetrahydrodipicolinate from L-aspartate: step 4/4. Functionally, catalyzes the conversion of 4-hydroxy-tetrahydrodipicolinate (HTPA) to tetrahydrodipicolinate. This Corynebacterium glutamicum (strain R) protein is 4-hydroxy-tetrahydrodipicolinate reductase.